The sequence spans 281 residues: 2-dehydro-3-deoxyphosphooctonate aldolase (281 aa).

It belongs to the KdsA family.

It is found in the cytoplasm. It carries out the reaction D-arabinose 5-phosphate + phosphoenolpyruvate + H2O = 3-deoxy-alpha-D-manno-2-octulosonate-8-phosphate + phosphate. It participates in carbohydrate biosynthesis; 3-deoxy-D-manno-octulosonate biosynthesis; 3-deoxy-D-manno-octulosonate from D-ribulose 5-phosphate: step 2/3. Its pathway is bacterial outer membrane biogenesis; lipopolysaccharide biosynthesis. The sequence is that of 2-dehydro-3-deoxyphosphooctonate aldolase from Pseudomonas fluorescens (strain Pf0-1).